We begin with the raw amino-acid sequence, 86 residues long: UPF0386 protein RC1_1783 (86 aa).

It belongs to the UPF0386 family.

The sequence is that of UPF0386 protein RC1_1783 from Rhodospirillum centenum (strain ATCC 51521 / SW).